Here is a 461-residue protein sequence, read N- to C-terminus: Photosystem II CP43 reaction center protein (461 aa).

A propeptide spanning residues methionine 1 to glutamate 2 is cleaved from the precursor. An N-acetylthreonine modification is found at threonine 3. Position 3 is a phosphothreonine (threonine 3). Helical transmembrane passes span leucine 57–alanine 81, leucine 122–asparagine 143, lysine 166–serine 188, lysine 243–serine 263, and tryptophan 279–alanine 300. Glutamate 355 serves as a coordination point for [CaMn4O5] cluster. The helical transmembrane segment at arginine 435–proline 459 threads the bilayer.

This sequence belongs to the PsbB/PsbC family. PsbC subfamily. PSII is composed of 1 copy each of membrane proteins PsbA, PsbB, PsbC, PsbD, PsbE, PsbF, PsbH, PsbI, PsbJ, PsbK, PsbL, PsbM, PsbT, PsbX, PsbY, PsbZ, Psb30/Ycf12, at least 3 peripheral proteins of the oxygen-evolving complex and a large number of cofactors. It forms dimeric complexes. It depends on Binds multiple chlorophylls and provides some of the ligands for the Ca-4Mn-5O cluster of the oxygen-evolving complex. It may also provide a ligand for a Cl- that is required for oxygen evolution. PSII binds additional chlorophylls, carotenoids and specific lipids. as a cofactor.

The protein resides in the plastid. The protein localises to the chloroplast thylakoid membrane. One of the components of the core complex of photosystem II (PSII). It binds chlorophyll and helps catalyze the primary light-induced photochemical processes of PSII. PSII is a light-driven water:plastoquinone oxidoreductase, using light energy to abstract electrons from H(2)O, generating O(2) and a proton gradient subsequently used for ATP formation. The polypeptide is Photosystem II CP43 reaction center protein (Trachelium caeruleum (Blue throatwort)).